Here is a 420-residue protein sequence, read N- to C-terminus: UDP-N-acetylglucosamine 1-carboxyvinyltransferase (420 aa).

Position 22–23 (22–23 (KN)) interacts with phosphoenolpyruvate. Arg-91 contributes to the UDP-N-acetyl-alpha-D-glucosamine binding site. Cys-115 functions as the Proton donor in the catalytic mechanism. Cys-115 is subject to 2-(S-cysteinyl)pyruvic acid O-phosphothioketal. UDP-N-acetyl-alpha-D-glucosamine contacts are provided by residues 120-124 (RPVDL), 160-163 (KVSV), Asp-305, and Ile-327.

Belongs to the EPSP synthase family. MurA subfamily.

The protein resides in the cytoplasm. It carries out the reaction phosphoenolpyruvate + UDP-N-acetyl-alpha-D-glucosamine = UDP-N-acetyl-3-O-(1-carboxyvinyl)-alpha-D-glucosamine + phosphate. It functions in the pathway cell wall biogenesis; peptidoglycan biosynthesis. Functionally, cell wall formation. Adds enolpyruvyl to UDP-N-acetylglucosamine. This chain is UDP-N-acetylglucosamine 1-carboxyvinyltransferase, found in Pectobacterium atrosepticum (strain SCRI 1043 / ATCC BAA-672) (Erwinia carotovora subsp. atroseptica).